The primary structure comprises 621 residues: pH-response transcription factor pacc-1 (621 aa).

Over residues 1–14 the composition is skewed to polar residues; that stretch reads MSSTPAQENGTVNG. The disordered stretch occupies residues 1–87; sequence MSSTPAQENG…PTTASNSSAP (87 aa). Over residues 15 to 87 the composition is skewed to low complexity; sequence ANAAPAPAPA…PTTASNSSAP (73 aa). C2H2-type zinc fingers lie at residues 95–120, 131–155, and 161–183; these read LVCR…CEKH, LTCQ…VRVH, and HKCD…VKTH. 2 disordered regions span residues 395-539 and 566-621; these read PTYA…PETY and DEDD…PRIN. Low complexity-rich tracts occupy residues 409-423 and 436-465; these read ASLA…PHSA and SYTS…VSYP. The YPX[LI] motif 1 motif lies at 464-467; that stretch reads YPTL. A compositionally biased stretch (polar residues) spans 476–486; the sequence is PSTSGLGSNFT. Basic and acidic residues predominate over residues 502–511; it reads RAADEADRAP. A compositionally biased stretch (polar residues) spans 515–525; it reads ASEQATVSSPS. The segment covering 583–595 has biased composition (low complexity); it reads RNQQQRNQQQQQQ. The YPX[LI] motif 2 motif lies at 614 to 617; the sequence is YPVL.

It belongs to the pacC/RIM101 family. As to quaternary structure, binds to DNA. Interacts with palA/prr-1, which binds to the two YPX[LI] motifs and is required for proteolytic processing. Post-translationally, activated by C-terminal proteolytic cleavage by signaling protease (probably palB/RIM13) at neutral to alkaline ambient pH.

The protein resides in the cytoplasm. It localises to the nucleus. Functionally, transcription factor that mediates regulation of both acid- and alkaline-expressed genes in response to ambient pH. At alkaline ambient pH, activates transcription of alkaline-expressed genes (including pacc-1 itself) and represses transcription of acid-expressed genes. The polypeptide is pH-response transcription factor pacc-1 (pacc-1) (Neurospora crassa (strain ATCC 24698 / 74-OR23-1A / CBS 708.71 / DSM 1257 / FGSC 987)).